Reading from the N-terminus, the 341-residue chain is MQYKKSLVASALVATSLAAYAPKDPWSTLTPSATYKGGITDYSSTFGIAVEPIATTASSKAKRAAAISQIGDGQIQATTKTTAAAVSQIGDGQIQATTKTKAAAVSQIGDGQIQATTKTTSAKTTAAAVSQIGDGQIQATTKTKAAAVSQIGDGQIQATTKTTAAAVSQIGDGQIQATTKTTAAAVSQIGDGQIQATTNTTVAPVSQITDGQIQATTLTSATIIPSPAPAPITNGTDPVTAETCKSSGTLEMNLKGGILTDGKGRIGSIVANRQFQFDGPPPQAGAIYAAGWSITPEGNLAIGDQDTFYQCLSGNFYNLYDEHIGTQCNAVHLQAIDLLNC.

Residues 1-18 form the signal peptide; sequence MQYKKSLVASALVATSLA. Residues 19-63 constitute a propeptide that is removed on maturation; sequence AYAPKDPWSTLTPSATYKGGITDYSSTFGIAVEPIATTASSKAKR. 8 PIR1/2/3 repeats span residues 64-82, 83-101, 102-125, 126-144, 145-163, 164-182, 183-201, and 202-220; these read AAAI…TKTT, AAAV…TKTK, AAAV…AKTT, AAAV…TKTT, AAAV…TNTT, and VAPV…TLTS.

The protein belongs to the PIR protein family. Covalently linked to beta-1,3-glucan of the inner cell wall layer via an alkali-sensitive ester linkage between the gamma-carboxyl group of glutamic acids, arising from specific glutamines within the PIR1/2/3 repeats, and hydroxyl groups of glucoses of beta-1,3-glucan chains. Post-translationally, O-glycosylated. Extensively O-mannosylated.

It localises to the secreted. Its subcellular location is the cell wall. Its function is as follows. Component of the outer cell wall layer. Required for stability of the cell wall and for optimal growth. Required for resistance against several antifungal and cell wall-perturbing agents and for tolerance to heat shock. The sequence is that of Cell wall mannoprotein PIR1 (PIR1) from Saccharomyces cerevisiae (strain ATCC 204508 / S288c) (Baker's yeast).